Reading from the N-terminus, the 200-residue chain is Coiled-coil domain-containing protein 28B (200 aa).

An N-acetylmethionine modification is found at M1. The segment covering 1-10 has biased composition (basic residues); the sequence is MDDKKKKRSP. Positions 1-49 are disordered; the sequence is MDDKKKKRSPKPCLAQPAQAPGTLRRVPVPTSHSGSLALGLPHLPSPKQ. S46 and S115 each carry phosphoserine. Over residues 141–152 the composition is skewed to acidic residues; sequence EEEDDEEEEDGV. Residues 141-164 form a disordered region; sequence EEEDDEEEEDGVTEGLPEEQKKTM. A coiled-coil region spans residues 158–183; it reads EEQKKTMADRNLDQLLSNLEDLSNSI.

Interacts with BBS1, BBS2, BBS4, BBS5, BBS6, BBS7 and TTC8/BBS8. Interacts with MAPKAP1/SIN1 isoform 1 and RICTOR.

Its subcellular location is the cytoplasm. The protein resides in the cytoskeleton. It localises to the microtubule organizing center. It is found in the centrosome. In terms of biological role, involved in ciliogenesis. Regulates cilia length through its interaction with MAPKAP1/SIN1 but independently of mTORC2 complex. Modulates mTORC2 complex assembly and function, possibly enhances AKT1 phosphorylation. Does not seem to modulate assembly and function of mTORC1 complex. The protein is Coiled-coil domain-containing protein 28B (CCDC28B) of Homo sapiens (Human).